The primary structure comprises 37 residues: Cytochrome b6-f complex subunit 5 (37 aa).

The helical transmembrane segment at Leu5–Ala25 threads the bilayer.

Belongs to the PetG family. As to quaternary structure, the 4 large subunits of the cytochrome b6-f complex are cytochrome b6, subunit IV (17 kDa polypeptide, PetD), cytochrome f and the Rieske protein, while the 4 small subunits are PetG, PetL, PetM and PetN. The complex functions as a dimer.

The protein resides in the plastid. Its subcellular location is the chloroplast thylakoid membrane. Component of the cytochrome b6-f complex, which mediates electron transfer between photosystem II (PSII) and photosystem I (PSI), cyclic electron flow around PSI, and state transitions. PetG is required for either the stability or assembly of the cytochrome b6-f complex. The sequence is that of Cytochrome b6-f complex subunit 5 from Chaetosphaeridium globosum (Charophycean green alga).